Here is a 794-residue protein sequence, read N- to C-terminus: Copper-exporting P-type ATPase (794 aa).

HMA domains are found at residues 4 to 69 (TTLT…YDVA) and 71 to 137 (EQVE…YDAE). Cu(+) is bound by residues C15, C18, C82, and C85. Transmembrane regions (helical) follow at residues 161-181 (IISAILSLPLLLVMVVHISPI), 186-206 (ILVNPWVQLILSTPVQFIIGW), 225-245 (VLVAVGTSAAYFYSIYEMMMW), 255-275 (LYFETSAILITLILLGKYLEA), 410-430 (YFVPIVVSIAVITFIIWIIFV), and 437-457 (PALVSAISVLVIACPCALGLA). D494 functions as the 4-aspartylphosphate intermediate in the catalytic mechanism. Positions 689 and 693 each coordinate Mg(2+). 2 consecutive transmembrane segments (helical) span residues 747–767 (LFWAFGYNVAGIPIAACGLLA) and 773–789 (AAMALSSVSVVMNALRL).

This sequence belongs to the cation transport ATPase (P-type) (TC 3.A.3) family. Type IB subfamily.

It is found in the cell membrane. The enzyme catalyses Cu(+)(in) + ATP + H2O = Cu(+)(out) + ADP + phosphate + H(+). Involved in copper export. The sequence is that of Copper-exporting P-type ATPase (copA) from Staphylococcus epidermidis (strain ATCC 35984 / DSM 28319 / BCRC 17069 / CCUG 31568 / BM 3577 / RP62A).